Consider the following 120-residue polypeptide: NAD(P)H-quinone oxidoreductase subunit 3 (120 aa).

3 helical membrane-spanning segments follow: residues 1-21 (MFVL…SLVP), 64-84 (MFAL…PWAV), and 89-109 (LGLL…VALV).

Belongs to the complex I subunit 3 family. NDH-1 can be composed of about 15 different subunits; different subcomplexes with different compositions have been identified which probably have different functions.

Its subcellular location is the cellular thylakoid membrane. It carries out the reaction a plastoquinone + NADH + (n+1) H(+)(in) = a plastoquinol + NAD(+) + n H(+)(out). The catalysed reaction is a plastoquinone + NADPH + (n+1) H(+)(in) = a plastoquinol + NADP(+) + n H(+)(out). Its function is as follows. NDH-1 shuttles electrons from an unknown electron donor, via FMN and iron-sulfur (Fe-S) centers, to quinones in the respiratory and/or the photosynthetic chain. The immediate electron acceptor for the enzyme in this species is believed to be plastoquinone. Couples the redox reaction to proton translocation, and thus conserves the redox energy in a proton gradient. Cyanobacterial NDH-1 also plays a role in inorganic carbon-concentration. The polypeptide is NAD(P)H-quinone oxidoreductase subunit 3 (Nostoc punctiforme (strain ATCC 29133 / PCC 73102)).